The following is a 189-amino-acid chain: UPF0398 protein LCK_00599 (189 aa).

This sequence belongs to the UPF0398 family.

The protein is UPF0398 protein LCK_00599 of Leuconostoc citreum (strain KM20).